The sequence spans 1098 residues: WD repeat-containing protein 72 (1098 aa).

8 WD repeats span residues 15 to 54 (APPH…KISA), 60 to 102 (GHSA…CVEK), 158 to 196 (WINC…NSIQ), 315 to 359 (ENKN…VSKF), 399 to 438 (AGTA…KARL), 456 to 501 (GHHQ…ILHK), 504 to 549 (LEAG…CLLR), and 552 to 591 (KHLF…LERH). Ser1077 and Ser1079 each carry phosphoserine.

The protein resides in the cytoplasmic vesicle. Its function is as follows. Plays a major role in formation of tooth enamel. Specifically required during the maturation phase of amelogenesis for normal formation of the enamel matrix and clearance of enamel proteins. May be involved in localization of the calcium transporter SLC24A4 to the ameloblast cell membrane. The chain is WD repeat-containing protein 72 (WDR72) from Pongo abelii (Sumatran orangutan).